The sequence spans 262 residues: Hydroxyethylthiazole kinase (262 aa).

Methionine 39 lines the substrate pocket. Lysine 115 and threonine 160 together coordinate ATP. Residue glycine 187 coordinates substrate.

The protein belongs to the Thz kinase family. It depends on Mg(2+) as a cofactor.

It carries out the reaction 5-(2-hydroxyethyl)-4-methylthiazole + ATP = 4-methyl-5-(2-phosphooxyethyl)-thiazole + ADP + H(+). The protein operates within cofactor biosynthesis; thiamine diphosphate biosynthesis; 4-methyl-5-(2-phosphoethyl)-thiazole from 5-(2-hydroxyethyl)-4-methylthiazole: step 1/1. In terms of biological role, catalyzes the phosphorylation of the hydroxyl group of 4-methyl-5-beta-hydroxyethylthiazole (THZ). In Staphylococcus epidermidis (strain ATCC 12228 / FDA PCI 1200), this protein is Hydroxyethylthiazole kinase.